Reading from the N-terminus, the 328-residue chain is Cytochrome c biogenesis protein CcsA (328 aa).

8 consecutive transmembrane segments (helical) span residues 13–33 (ISFS…LVNL), 46–66 (GIVI…IYSG), 73–93 (LYES…VSYF), 101–121 (LNAI…SGLL), 146–166 (MVLG…LLVI), 234–254 (IISL…VWAN), 263–283 (WDPK…YLHI), and 295–315 (AIVA…VNLL).

It belongs to the CcmF/CycK/Ccl1/NrfE/CcsA family. As to quaternary structure, may interact with Ccs1.

It localises to the plastid. Its subcellular location is the chloroplast thylakoid membrane. In terms of biological role, required during biogenesis of c-type cytochromes (cytochrome c6 and cytochrome f) at the step of heme attachment. This Aethionema cordifolium (Lebanon stonecress) protein is Cytochrome c biogenesis protein CcsA.